Consider the following 244-residue polypeptide: MLQNIRIVLVETSHTGNMGSVARAMKTMGLTNLWLVNPLVKPDSQAIALAAGASDVIGNAQIVDTLDEALAGCSLVVGTSARSRTLPWPMLDPRECGLKSVAEGQHAPVALVFGRERVGLTNDELQKCHYHVAIAANPEYSSLNLAMAVQVIAYEVRMAWLAAQEQAQPAVEHEEAPYPLVDDLERFYDHLEQTLLATGFIRPNHPGQVMNKLRRLFTRARPESQELNILRGMLASIEQQNKGK.

Residues 79 to 81, G114, I134, and 141 to 143 each bind S-adenosyl-L-methionine; these read TSA and SSL.

It belongs to the class IV-like SAM-binding methyltransferase superfamily. RNA methyltransferase TrmH family. As to quaternary structure, homodimer.

The protein resides in the cytoplasm. It catalyses the reaction cytidine(32) in tRNA + S-adenosyl-L-methionine = 2'-O-methylcytidine(32) in tRNA + S-adenosyl-L-homocysteine + H(+). It carries out the reaction uridine(32) in tRNA + S-adenosyl-L-methionine = 2'-O-methyluridine(32) in tRNA + S-adenosyl-L-homocysteine + H(+). Its function is as follows. Catalyzes the formation of 2'O-methylated cytidine (Cm32) or 2'O-methylated uridine (Um32) at position 32 in tRNA. The polypeptide is tRNA (cytidine/uridine-2'-O-)-methyltransferase TrmJ (trmJ) (Klebsiella pneumoniae subsp. pneumoniae (strain ATCC 700721 / MGH 78578)).